A 61-amino-acid polypeptide reads, in one-letter code: METIVLLFLLALVFCTLEMGMVEAEHGCPDNEDECHEHCKSIGKSGGYCVGPHKQTCRCNP.

The signal sequence occupies residues 1–24 (METIVLLFLLALVFCTLEMGMVEA). Cystine bridges form between Cys-28-Cys-49, Cys-35-Cys-57, and Cys-39-Cys-59.

It belongs to the invertebrate defensin family. Type 2 subfamily. As to expression, highly expressed in non-venom gland (hemolymph) and moderately expressed in venom gland.

It localises to the secreted. Its function is as follows. Antibacterial peptide active against Gram-positive bacteria, but not on Gram-negative bacteria. Also has weak blocking activity on Kv1.1/KCNA1, Kv1.2/KCNA2, Kv1.3/KCNA3, KCa3.1/KCNN4/IK, KCa2.3/KCNN3/SK3 and Kv11.1/KCNH2/ERG1 channels (tested at 1 uM). It inhibits potassium channel current by interacting with the pore region. This is Defensin BmKDfsin2 from Olivierus martensii (Manchurian scorpion).